Consider the following 752-residue polypeptide: MRKDVRIVLAGDPDVGKSTLITSLVKEAYVAKVQKVVPPITLPPEVAPEAVVTKIVDTSSSPEHRANLEAELRRANVICIVYSISAPSSFDRIPTYWLPYIRSLGVNVPVILVGNKIDLRSGDVTNAALEDELAPVMAEFKEVETCVECSARIPLNVSEVFYFAQKAVLYPTAPLYDSREHVLKPACVDALKRIFRLCDSDKDGLLSDGELNDFQRKCFDTPLQAQELEGIKDLVVQAPIAGLRYNHENSSVAASGSSANGDIPSHHPHLREGSLTMAGFLYLHTLFIQRGRLETTWTVLRTFGYGVDLSLQDSFVKPAFAVPPECSVELSPNGYQFLTDIFEVHDKDRDGALSEEELDSLFITAPDNRHPWQGTGFPTSTITDEHGAVTLQGWLAQWSMTTLLDHRTTLAYLAYLGYPSFPLSGSSGSASTPAPIPLTPTGPPGSRPSRNRTPCPPSTITALKLTRPRKTDKKKKGAIQRSVFLGFVLGAAGSGKTAILRNMVGKRFANAYEPTQKMMSVVSTVEQAGAERYLVLQEFGSRYEAEVLRNTAKLSAADVIVFVYDSSDTNSFSYISNLRQQYPLLQSMPSLFVATKADLDLAQQRHEVQPDTYCRKLGLKIPGLGAGPLNISIRDGQSADLYGLICTIAVDPKGAVQGGYDRNALSYGTNRWQFWGYIGLVVIGGGGAVWICAKVLKVPIGSTLGFGSSASTTSWWLSGAQARGAGGPNATKVSSWFDWIRWQSSSNVRSEL.

The Cytoplasmic portion of the chain corresponds to 1-671 (MRKDVRIVLA…RNALSYGTNR (671 aa)). Residues 2–170 (RKDVRIVLAG…FYFAQKAVLY (169 aa)) form the Miro 1 domain. GTP contacts are provided by residues 11–18 (GDPDVGKS), 57–61 (DTSSS), and 115–118 (NKID). 2 consecutive EF-hand domains span residues 186-221 (ACVDALKRIFRLCDSDKDGLLSDGELNDFQRKCFDT) and 333-368 (NGYQFLTDIFEVHDKDRDGALSEEELDSLFITAPDN). Residues D199, D201, D203, E210, D346, D348, D350, and E357 each coordinate Ca(2+). The disordered stretch occupies residues 426–460 (SSGSASTPAPIPLTPTGPPGSRPSRNRTPCPPSTI). The segment covering 434–446 (APIPLTPTGPPGS) has biased composition (pro residues). The Miro 2 domain maps to 481 to 651 (RSVFLGFVLG…YGLICTIAVD (171 aa)). Residues 490-497 (GAAGSGKT), 526-530 (EQAGA), and 595-598 (TKAD) contribute to the GTP site. A helical; Anchor for type IV membrane protein transmembrane segment spans residues 672–692 (WQFWGYIGLVVIGGGGAVWIC). Over 693-752 (AKVLKVPIGSTLGFGSSASTTSWWLSGAQARGAGGPNATKVSSWFDWIRWQSSSNVRSEL) the chain is Mitochondrial intermembrane.

Belongs to the mitochondrial Rho GTPase family.

Its subcellular location is the mitochondrion outer membrane. Mitochondrial GTPase involved in mitochondrial trafficking. Probably involved in control of anterograde transport of mitochondria and their subcellular distribution. The chain is Mitochondrial Rho GTPase 1 (GEM1) from Mycosarcoma maydis (Corn smut fungus).